A 45-amino-acid polypeptide reads, in one-letter code: Mu-conotoxin-like Cal 12.1.2c (45 aa).

4 cysteine pairs are disulfide-bonded: C3–C16, C11–C28, C18–C33, and C27–C39. P23 is subject to 4-hydroxyproline. Residues W37 and W38 each carry the 6'-bromotryptophan modification. P40 carries the post-translational modification 4-hydroxyproline. W44 carries the post-translational modification 6'-bromotryptophan.

As to expression, expressed by the venom duct.

Its subcellular location is the secreted. Functionally, mu-conotoxins block voltage-gated sodium channels. This toxin reversibly blocks voltage-gated sodium channel in cephalopods, with no alteration in the voltage dependence of sodium conductance or on the kinetics of inactivation. This chain is Mu-conotoxin-like Cal 12.1.2c, found in Californiconus californicus (California cone).